A 119-amino-acid polypeptide reads, in one-letter code: Protein SPIRAL1 (119 aa).

Positions 1–11 (MGRGNSCGGGQ) are enriched in gly residues. 2 disordered regions span residues 1–47 (MGRG…PPVT) and 85–105 (EGQNTGNFLTDRPSTKVHAAP). Positions 24–34 (APKPVPAPRPA) are enriched in pro residues.

It belongs to the SPIRAL1 family. Ubiquitinated. Upon salt-stress induction, it is subject to proteasome-dependent degradation. Ubiquitous. High expression was associated with tissues undergoing rapid cell expansion, including the root elongation zone, hypocotyls of dark grown-seedlings, and cotyledons of light-grown seedlings.

The protein resides in the cytoplasm. Its subcellular location is the cytoskeleton. The protein localises to the phragmoplast. It localises to the spindle. In terms of biological role, required for directional control of cell elongation. Stabilizes growing ends of cortical microtubules and influences their dynamic properties. Acts redundantly with SP1Ls in maintaining the cortical microtubules organization essential for anisotropic cell growth. Plays a key role in salt stress-induced microtubules disassembly. In Arabidopsis thaliana (Mouse-ear cress), this protein is Protein SPIRAL1 (SPR1).